The primary structure comprises 349 residues: tRNA N6-adenosine threonylcarbamoyltransferase (349 aa).

Residues histidine 113 and histidine 117 each contribute to the Fe cation site. Residues 135–139 (LVSGG), aspartate 169, glycine 182, aspartate 186, and asparagine 281 contribute to the substrate site. Aspartate 309 is a binding site for Fe cation.

This sequence belongs to the KAE1 / TsaD family. Fe(2+) serves as cofactor.

It is found in the cytoplasm. The catalysed reaction is L-threonylcarbamoyladenylate + adenosine(37) in tRNA = N(6)-L-threonylcarbamoyladenosine(37) in tRNA + AMP + H(+). Its function is as follows. Required for the formation of a threonylcarbamoyl group on adenosine at position 37 (t(6)A37) in tRNAs that read codons beginning with adenine. Is involved in the transfer of the threonylcarbamoyl moiety of threonylcarbamoyl-AMP (TC-AMP) to the N6 group of A37, together with TsaE and TsaB. TsaD likely plays a direct catalytic role in this reaction. This chain is tRNA N6-adenosine threonylcarbamoyltransferase, found in Corynebacterium aurimucosum (strain ATCC 700975 / DSM 44827 / CIP 107346 / CN-1) (Corynebacterium nigricans).